The following is a 512-amino-acid chain: MSQTEEKKGIGRRVQAFGSFLSSMIMPNIGAFIAWGFIAAIFIDNGWLPNKDLATLAGPMITYLIPLLIAFSGGRLIYDLRGGIIAATATMGVIVALPDTPMLLGAMIMGPLVGWLMKKTDQLIQPRTPQGFEMLFNNFSAGILGFIMTIAGFKILAPLMKFIMHILSVAVEALVHAHLLPLVSILVEPAKIVFLNNAINHGVFTPLGADQAAKAGQSILYTIESNPGPGLGILLAYMIFGKGTAKATSYGAGIIHFLGGIHEIYFPYVLMRPLLFIAVILGGMTGVATYQATGFGFKSPASPGSFIVYCLNAPRGEFLHMLLGVFLAALVSFVVAALIMKFTREPKQDLEAATAQMENTKGKKSSVASKLVSSDKNVNTEENASGNVSETSSSDDDPEALLDNYNTEDVDAHNYNNINHVIFACDAGMGSSAMGASMLRNKFKKAGINDITVTNTAINQLPKDAQLVITQKKLTDRAIKQTPNAIHISVDNFLNSPRYEELLNNLKKDDQA.

Over 1 to 28 (MSQTEEKKGIGRRVQAFGSFLSSMIMPN) the chain is Cytoplasmic. The 333-residue stretch at 17–349 (FGSFLSSMIM…MKFTREPKQD (333 aa)) folds into the PTS EIIC type-2 domain. Residues 29–50 (IGAFIAWGFIAAIFIDNGWLPN) traverse the membrane as a helical segment. The Extracellular segment spans residues 51–54 (KDLA). Residues 55–75 (TLAGPMITYLIPLLIAFSGGR) form a helical membrane-spanning segment. Topologically, residues 76-139 (LIYDLRGGII…QGFEMLFNNF (64 aa)) are cytoplasmic. Residues 140-161 (SAGILGFIMTIAGFKILAPLMK) traverse the membrane as a helical segment. Topologically, residues 162-170 (FIMHILSVA) are extracellular. The chain crosses the membrane as a helical span at residues 171–191 (VEALVHAHLLPLVSILVEPAK). The Cytoplasmic portion of the chain corresponds to 192 to 278 (IVFLNNAINH…VLMRPLLFIA (87 aa)). A helical transmembrane segment spans residues 279–298 (VILGGMTGVATYQATGFGFK). The Extracellular portion of the chain corresponds to 299–318 (SPASPGSFIVYCLNAPRGEF). A helical transmembrane segment spans residues 319 to 340 (LHMLLGVFLAALVSFVVAALIM). The Cytoplasmic portion of the chain corresponds to 341–512 (KFTREPKQDL…LNNLKKDDQA (172 aa)). Positions 355–402 (AQMENTKGKKSSVASKLVSSDKNVNTEENASGNVSETSSSDDDPEALL) are disordered. Residues 365 to 376 (SSVASKLVSSDK) show a composition bias toward low complexity. A compositionally biased stretch (polar residues) spans 380-392 (TEENASGNVSETS). The PTS EIIB type-2 domain maps to 419–512 (NHVIFACDAG…LNNLKKDDQA (94 aa)). Cysteine 425 serves as the catalytic Phosphocysteine intermediate; for EIIB activity. Cysteine 425 bears the Phosphocysteine; by EIIA mark.

Homodimer.

It is found in the cell membrane. The catalysed reaction is D-mannitol(out) + N(pros)-phospho-L-histidyl-[protein] = D-mannitol 1-phosphate(in) + L-histidyl-[protein]. The phosphoenolpyruvate-dependent sugar phosphotransferase system (sugar PTS), a major carbohydrate active transport system, catalyzes the phosphorylation of incoming sugar substrates concomitantly with their translocation across the cell membrane. The enzyme II CmtAB PTS system is involved in D-mannitol transport. The sequence is that of PTS system mannitol-specific EIICB component (mtlA) from Staphylococcus aureus (strain Mu50 / ATCC 700699).